The following is a 420-amino-acid chain: Light-independent protochlorophyllide reductase subunit N (420 aa).

[4Fe-4S] cluster is bound by residues Cys21, Cys46, and Cys103.

This sequence belongs to the BchN/ChlN family. As to quaternary structure, protochlorophyllide reductase is composed of three subunits; BchL, BchN and BchB. Forms a heterotetramer of two BchB and two BchN subunits. The cofactor is [4Fe-4S] cluster.

It carries out the reaction chlorophyllide a + oxidized 2[4Fe-4S]-[ferredoxin] + 2 ADP + 2 phosphate = protochlorophyllide a + reduced 2[4Fe-4S]-[ferredoxin] + 2 ATP + 2 H2O. Its pathway is porphyrin-containing compound metabolism; bacteriochlorophyll biosynthesis (light-independent). Functionally, component of the dark-operative protochlorophyllide reductase (DPOR) that uses Mg-ATP and reduced ferredoxin to reduce ring D of protochlorophyllide (Pchlide) to form chlorophyllide a (Chlide). This reaction is light-independent. The NB-protein (BchN-BchB) is the catalytic component of the complex. This chain is Light-independent protochlorophyllide reductase subunit N, found in Chlorobium luteolum (strain DSM 273 / BCRC 81028 / 2530) (Pelodictyon luteolum).